The following is a 61-amino-acid chain: Small ribosomal subunit protein uS14 (61 aa).

Positions 24, 27, 40, and 43 each coordinate Zn(2+).

The protein belongs to the universal ribosomal protein uS14 family. Zinc-binding uS14 subfamily. Part of the 30S ribosomal subunit. Contacts proteins S3 and S10. Requires Zn(2+) as cofactor.

Its function is as follows. Binds 16S rRNA, required for the assembly of 30S particles and may also be responsible for determining the conformation of the 16S rRNA at the A site. The protein is Small ribosomal subunit protein uS14 of Streptococcus mutans serotype c (strain ATCC 700610 / UA159).